A 467-amino-acid polypeptide reads, in one-letter code: Zinc finger protein 410 (467 aa).

Disordered regions lie at residues 84-111 (PDGE…SLLQ) and 187-214 (NAKT…PLPQ). 5 consecutive C2H2-type zinc fingers follow at residues 219-243 (LKCT…LKTH), 249-273 (FICP…MRTH), 279-303 (FVCP…LRIH), 309-333 (FLCE…LVVH), and 339-362 (HQCQ…RKHH). Zn(2+)-binding residues include Cys221, Cys226, His239, His243, Cys251, Cys256, His269, His273, Cys281, Cys286, His299, His303, Cys311, Cys316, His329, His333, Cys341, Cys344, His357, and His361.

Interacts with CDKN2A/p14ARF. Post-translationally, O-glycosylated. O-GlcNAcylation may occur in response to increasing glucose levels and affect transcription factor activity. In terms of processing, sumoylated. Sumoylation increases its half-life, possibly by blocking ubiquitin-mediated degradation.

The protein resides in the nucleus. The protein localises to the chromosome. Its function is as follows. Transcription factor that binds to the sequence motif 5'-CATCCCATAATA-3', and is specifically required to silence expression of fetal hemoglobin in adult erythroid cells. Prevents expression of fetal hemoglobin genes HBG1 and HBG2 through CHD4: acts as a direct transcriptional activator of CHD4, a central component of the NuRD complex that represses transcription of fetal hemoglobin genes HBG1 and HBG2 in erythroid cells. May also activate transcription of matrix-remodeling genes such as MMP1 during fibroblast senescence. May activate transcription of the gap junction gene GJC1, perhaps in response to increasing glucose. However, recent studies suggest that ZNF410 is dedicated to regulate expression of a single gene: CHD4. This chain is Zinc finger protein 410, found in Bos taurus (Bovine).